Reading from the N-terminus, the 330-residue chain is Biotin synthase (330 aa).

The 227-residue stretch at 42–268 folds into the Radical SAM core domain; sequence YYGRKVKLNM…INPSKEIRIA (227 aa). Residues Cys60, Cys64, and Cys67 each coordinate [4Fe-4S] cluster. Residues Cys103, Cys136, Cys196, and Arg266 each contribute to the [2Fe-2S] cluster site.

This sequence belongs to the radical SAM superfamily. Biotin synthase family. Homodimer. [4Fe-4S] cluster is required as a cofactor. [2Fe-2S] cluster serves as cofactor.

The enzyme catalyses (4R,5S)-dethiobiotin + (sulfur carrier)-SH + 2 reduced [2Fe-2S]-[ferredoxin] + 2 S-adenosyl-L-methionine = (sulfur carrier)-H + biotin + 2 5'-deoxyadenosine + 2 L-methionine + 2 oxidized [2Fe-2S]-[ferredoxin]. Its pathway is cofactor biosynthesis; biotin biosynthesis; biotin from 7,8-diaminononanoate: step 2/2. Catalyzes the conversion of dethiobiotin (DTB) to biotin by the insertion of a sulfur atom into dethiobiotin via a radical-based mechanism. This is Biotin synthase from Macrococcus caseolyticus (strain JCSC5402) (Macrococcoides caseolyticum).